We begin with the raw amino-acid sequence, 831 residues long: Probable glucan 1,3-beta-glucosidase D (831 aa).

6 stretches are compositionally biased toward basic and acidic residues: residues 1–24 (MPSH…YREV), 44–56 (RRDD…RSHE), 79–93 (RSHD…RSRA), 102–115 (SRRD…EYRR), 137–151 (RDGQ…DREA), and 198–213 (QRER…LESK). Disordered regions lie at residues 1–179 (MPSH…SGSH) and 192–241 (HYDE…GQSK). Topologically, residues 1–297 (MPSHSRSRDR…AQPPFWKRKK (297 aa)) are cytoplasmic. Residues 298 to 318 (WWIVIGVLVVVLAIVIPVAVV) form a helical; Signal-anchor for type II membrane protein membrane-spanning segment. Residues 319 to 831 (MSKKHGHDDD…PSFGDLPEYY (513 aa)) lie on the Extracellular side of the membrane. N-linked (GlcNAc...) asparagine glycans are attached at residues Asn376, Asn381, Asn393, Asn410, Asn442, Asn546, and Asn558. Glu597 acts as the Proton donor in catalysis. N-linked (GlcNAc...) asparagine glycosylation is found at Asn610, Asn636, Asn669, and Asn689. The Nucleophile role is filled by Glu702.

The protein belongs to the glycosyl hydrolase 5 (cellulase A) family.

It is found in the cell membrane. The catalysed reaction is Successive hydrolysis of beta-D-glucose units from the non-reducing ends of (1-&gt;3)-beta-D-glucans, releasing alpha-glucose.. Functionally, glucosidase involved in the degradation of cellulosic biomass. Active on lichenan. In Aspergillus flavus (strain ATCC 200026 / FGSC A1120 / IAM 13836 / NRRL 3357 / JCM 12722 / SRRC 167), this protein is Probable glucan 1,3-beta-glucosidase D (exgD).